The chain runs to 265 residues: Putative carbamate hydrolase RutD (265 aa).

One can recognise an AB hydrolase-1 domain in the interval 21–123 (PILLSAGMGG…TIVNGWARAD (103 aa)).

This sequence belongs to the AB hydrolase superfamily. Hydrolase RutD family.

The enzyme catalyses carbamate + 2 H(+) = NH4(+) + CO2. In terms of biological role, involved in pyrimidine catabolism. May facilitate the hydrolysis of carbamate, a reaction that can also occur spontaneously. In Azorhizobium caulinodans (strain ATCC 43989 / DSM 5975 / JCM 20966 / LMG 6465 / NBRC 14845 / NCIMB 13405 / ORS 571), this protein is Putative carbamate hydrolase RutD.